A 164-amino-acid chain; its full sequence is RNA pyrophosphohydrolase (164 aa).

The 147-residue stretch at 12 to 158 (RYRQCAGVML…KREVYRAVVK (147 aa)) folds into the Nudix hydrolase domain. A Nudix box motif is present at residues 47 to 68 (GGIDPGETQQEAAMRELEEETG).

It belongs to the Nudix hydrolase family. RppH subfamily. Requires a divalent metal cation as cofactor.

Accelerates the degradation of transcripts by removing pyrophosphate from the 5'-end of triphosphorylated RNA, leading to a more labile monophosphorylated state that can stimulate subsequent ribonuclease cleavage. The sequence is that of RNA pyrophosphohydrolase from Erythrobacter litoralis (strain HTCC2594).